Consider the following 69-residue polypeptide: Sec-independent protein translocase protein TatA (69 aa).

The chain crosses the membrane as a helical span at residues 1–21 (MFPKLGMGELVVILLIVVILF). The segment at 43 to 69 (SFSGEDEEKPSTPGATSSDEASKAKQA) is disordered.

It belongs to the TatA/E family. As to quaternary structure, the Tat system comprises two distinct complexes: a TatABC complex, containing multiple copies of TatA, TatB and TatC subunits, and a separate TatA complex, containing only TatA subunits. Substrates initially bind to the TatABC complex, which probably triggers association of the separate TatA complex to form the active translocon.

It is found in the cell inner membrane. Its function is as follows. Part of the twin-arginine translocation (Tat) system that transports large folded proteins containing a characteristic twin-arginine motif in their signal peptide across membranes. TatA could form the protein-conducting channel of the Tat system. The sequence is that of Sec-independent protein translocase protein TatA from Anaeromyxobacter sp. (strain Fw109-5).